Here is a 178-residue protein sequence, read N- to C-terminus: Large ribosomal subunit protein uL6 (178 aa).

Residues 155–169 (PYKGKGIKYDNEQIR) are compositionally biased toward basic and acidic residues. A disordered region spans residues 155-178 (PYKGKGIKYDNEQIRRKAGKSGGK).

This sequence belongs to the universal ribosomal protein uL6 family. In terms of assembly, part of the 50S ribosomal subunit.

This protein binds to the 23S rRNA, and is important in its secondary structure. It is located near the subunit interface in the base of the L7/L12 stalk, and near the tRNA binding site of the peptidyltransferase center. The sequence is that of Large ribosomal subunit protein uL6 from Nitratidesulfovibrio vulgaris (strain DSM 19637 / Miyazaki F) (Desulfovibrio vulgaris).